We begin with the raw amino-acid sequence, 637 residues long: 1-deoxy-D-xylulose-5-phosphate synthase (637 aa).

Residues His71 and 112–114 (SHA) contribute to the thiamine diphosphate site. Mg(2+) is bound at residue Asp144. Thiamine diphosphate-binding positions include 145–146 (GA), Asn173, Tyr284, and Glu365. Mg(2+) is bound at residue Asn173.

It belongs to the transketolase family. DXPS subfamily. Homodimer. Mg(2+) is required as a cofactor. Thiamine diphosphate serves as cofactor.

It catalyses the reaction D-glyceraldehyde 3-phosphate + pyruvate + H(+) = 1-deoxy-D-xylulose 5-phosphate + CO2. The protein operates within metabolic intermediate biosynthesis; 1-deoxy-D-xylulose 5-phosphate biosynthesis; 1-deoxy-D-xylulose 5-phosphate from D-glyceraldehyde 3-phosphate and pyruvate: step 1/1. Functionally, catalyzes the acyloin condensation reaction between C atoms 2 and 3 of pyruvate and glyceraldehyde 3-phosphate to yield 1-deoxy-D-xylulose-5-phosphate (DXP). In Mycolicibacterium vanbaalenii (strain DSM 7251 / JCM 13017 / BCRC 16820 / KCTC 9966 / NRRL B-24157 / PYR-1) (Mycobacterium vanbaalenii), this protein is 1-deoxy-D-xylulose-5-phosphate synthase.